The chain runs to 424 residues: Gamma-glutamyl phosphate reductase (424 aa).

The protein belongs to the gamma-glutamyl phosphate reductase family.

It is found in the cytoplasm. It carries out the reaction L-glutamate 5-semialdehyde + phosphate + NADP(+) = L-glutamyl 5-phosphate + NADPH + H(+). It functions in the pathway amino-acid biosynthesis; L-proline biosynthesis; L-glutamate 5-semialdehyde from L-glutamate: step 2/2. In terms of biological role, catalyzes the NADPH-dependent reduction of L-glutamate 5-phosphate into L-glutamate 5-semialdehyde and phosphate. The product spontaneously undergoes cyclization to form 1-pyrroline-5-carboxylate. The sequence is that of Gamma-glutamyl phosphate reductase from Shewanella sediminis (strain HAW-EB3).